A 374-amino-acid chain; its full sequence is NADH-quinone oxidoreductase subunit D 1 (374 aa).

This sequence belongs to the complex I 49 kDa subunit family. As to quaternary structure, NDH-1 is composed of 14 different subunits. Subunits NuoB, C, D, E, F, and G constitute the peripheral sector of the complex.

It is found in the cell membrane. It catalyses the reaction a quinone + NADH + 5 H(+)(in) = a quinol + NAD(+) + 4 H(+)(out). NDH-1 shuttles electrons from NADH, via FMN and iron-sulfur (Fe-S) centers, to quinones in the respiratory chain. The immediate electron acceptor for the enzyme in this species is believed to be ubiquinone. Couples the redox reaction to proton translocation (for every two electrons transferred, four hydrogen ions are translocated across the cytoplasmic membrane), and thus conserves the redox energy in a proton gradient. The protein is NADH-quinone oxidoreductase subunit D 1 of Roseiflexus sp. (strain RS-1).